Consider the following 533-residue polypeptide: Protein trichome birefringence-like 18 (533 aa).

The chain crosses the membrane as a helical; Signal-anchor for type II membrane protein span at residues 21 to 41 (VSTVAIAIGGLASFFVFGLLL). The interval 93–171 (SDSSSGLPVV…PDDVSETASA (79 aa)) is disordered. The span at 113 to 154 (SSDRKLETPLTQEKEDLVSSDITEKTDVQSGERETNVSKAED) shows a compositional bias: basic and acidic residues. A GDS motif motif is present at residues 248-250 (GDS). The segment at 475–502 (HDGHPGPFRSPDPNKITKRGPDGRPPPQ) is disordered. The short motif at 503-517 (DCLHWCMPGPVDTWN) is the DCXHWCLPGXXDXWN motif element.

It belongs to the PC-esterase family. TBL subfamily.

Its subcellular location is the membrane. In terms of biological role, may act as a bridging protein that binds pectin and other cell wall polysaccharides. Probably involved in maintaining esterification of pectins. May be involved in the specific O-acetylation of cell wall polymers. This Arabidopsis thaliana (Mouse-ear cress) protein is Protein trichome birefringence-like 18 (TBL18).